We begin with the raw amino-acid sequence, 136 residues long: Protein NrdI (136 aa).

The protein belongs to the NrdI family.

Its function is as follows. Probably involved in ribonucleotide reductase function. The protein is Protein NrdI of Enterobacter sp. (strain 638).